Here is a 116-residue protein sequence, read N- to C-terminus: Movement protein TGB2 (116 aa).

The Cytoplasmic portion of the chain corresponds to 1 to 11 (MPLTPPPNPQK). The chain crosses the membrane as a helical span at residues 12–32 (TYQIAILALGLVLLAFVLISD). The Lumenal segment spans residues 33–77 (HSPKVGDHLHNLPFGGEYKDGTKSIKYFQRPNQHSLSKTLAKSHN). A helical membrane pass occupies residues 78 to 98 (TTIFLLILGLIVTLHGLHYFN). The Cytoplasmic portion of the chain corresponds to 99-116 (NNRRVSSSLHCVLCQNKH).

Belongs to the Tymovirales TGBp2 protein family.

The protein localises to the host endoplasmic reticulum membrane. Its function is as follows. Plays a role in viral cell-to-cell propagation, by facilitating genome transport to neighboring plant cells through plasmosdesmata,. This chain is Movement protein TGB2, found in White clover mosaic virus (strain M) (WCMV).